A 95-amino-acid chain; its full sequence is Small ubiquitin-related modifier 2 (95 aa).

Met1 is covalently cross-linked (Peptide (Met-Gly) (interchain with G-Cter in ubiquitin)). Residues Lys5 and Lys7 each participate in a glycyl lysine isopeptide (Lys-Gly) (interchain with G-Cter in SUMO2) cross-link. Lys11 bears the N6-acetyllysine; alternate mark. Residue Lys11 forms a Glycyl lysine isopeptide (Lys-Gly) (interchain with G-Cter in SUMO); alternate linkage. Lys11 is covalently cross-linked (Glycyl lysine isopeptide (Lys-Gly) (interchain with G-Cter in SUMO1); alternate). Lys11 participates in a covalent cross-link: Glycyl lysine isopeptide (Lys-Gly) (interchain with G-Cter in SUMO2); alternate. Lys11 participates in a covalent cross-link: Glycyl lysine isopeptide (Lys-Gly) (interchain with G-Cter in ubiquitin); alternate. Residues 16–95 form the Ubiquitin-like domain; it reads DHINLKVAGQ…VFQQQTGGVY (80 aa). Lys21 participates in a covalent cross-link: Glycyl lysine isopeptide (Lys-Gly) (interchain with G-Cter in SUMO2). Gly93 participates in a covalent cross-link: Glycyl lysine isopeptide (Gly-Lys) (interchain with K-? in acceptor proteins). Residues 94–95 constitute a propeptide that is removed on maturation; the sequence is VY.

This sequence belongs to the ubiquitin family. SUMO subfamily. As to quaternary structure, interacts with SAE2 and UBE2I. Interacts with ZNF451. Identified in a complex with ZNF451 and UBE2I/UBC9, where one ZNF451 interacts with one UBE2I/UBC9 and two SUMO2 chains, one bound to the UBE2I/UBC9 active site and the other to another region of the same UBE2I/UBC9 molecule. Covalently attached to a number of proteins. Interacts with PELP1. Interacts with USP25; the interaction sumoylates USP25. Interacts with SIMC1, CASP8AP2, RNF111 and SOBP (via SIM domains). Interacts with MTA1. Interacts with HINT1. Interacts with GCNA (via SIM domains); this interaction allows the GCNA recruitment to DPCs sites. Post-translationally, polymeric chains can be formed through Lys-11 cross-linking. Polymeric SUMO2 chains undergo 'Lys-6'-, 'Lys-11'-, 'Lys-48'- and 'Lys-63'-linked polyubiquitination by RNF4. In terms of processing, cleavage of precursor form by SENP1 or SENP2 is necessary for function. Monoubiquitinated N-terminally by UBE2W, which primes it for RNF4-dependent polyubiquitination by the UBE2V1-UBE2N heterodimer.

It localises to the nucleus. The protein localises to the PML body. Its function is as follows. Ubiquitin-like protein that can be covalently attached to proteins as a monomer or as a lysine-linked polymer. Covalent attachment via an isopeptide bond to its substrates requires prior activation by the E1 complex SAE1-SAE2 and linkage to the E2 enzyme UBE2I, and can be promoted by an E3 ligase such as PIAS1-4, RANBP2 or CBX4. This post-translational modification on lysine residues of proteins plays a crucial role in a number of cellular processes such as nuclear transport, DNA replication and repair, mitosis and signal transduction. Polymeric SUMO2 chains are also susceptible to polyubiquitination which functions as a signal for proteasomal degradation of modified proteins. Plays a role in the regulation of sumoylation status of SETX. This chain is Small ubiquitin-related modifier 2, found in Bos taurus (Bovine).